We begin with the raw amino-acid sequence, 263 residues long: MSSAEGPKSGGGSKGSKSEASSRVRGSAPTGSRDLFVRVRTAKGRKASSTRWLQRQLNDPYVLEAKRQGLRSRAAFKLIELDERFTLLKPGMRVVDLGAAPGGWTQIAVERTRSLHPNGGKVVGMDILEWEGVAGATCLTHDFMDDAAPLMLKGAMDGAVDLVLSDMAAPTTGHRQTDHLRVMGLAEAAWYFAEEVLAPGGAFVCKVFQGGTEGALLTRMKKMCEVIRHAKPPASRQGSPEVYVIAQGFRGLSGGEDTGRDES.

Residues 1–34 (MSSAEGPKSGGGSKGSKSEASSRVRGSAPTGSRD) are disordered. Residues glycine 102, tryptophan 104, aspartate 126, aspartate 142, and aspartate 166 each contribute to the S-adenosyl-L-methionine site. Catalysis depends on lysine 206, which acts as the Proton acceptor.

Belongs to the class I-like SAM-binding methyltransferase superfamily. RNA methyltransferase RlmE family.

The protein localises to the cytoplasm. It catalyses the reaction uridine(2552) in 23S rRNA + S-adenosyl-L-methionine = 2'-O-methyluridine(2552) in 23S rRNA + S-adenosyl-L-homocysteine + H(+). Functionally, specifically methylates the uridine in position 2552 of 23S rRNA at the 2'-O position of the ribose in the fully assembled 50S ribosomal subunit. This chain is Ribosomal RNA large subunit methyltransferase E, found in Rhodospirillum rubrum (strain ATCC 11170 / ATH 1.1.1 / DSM 467 / LMG 4362 / NCIMB 8255 / S1).